The primary structure comprises 88 residues: UPF0250 protein Swoo_3713 (88 aa).

The protein belongs to the UPF0250 family.

The protein is UPF0250 protein Swoo_3713 of Shewanella woodyi (strain ATCC 51908 / MS32).